An 86-amino-acid polypeptide reads, in one-letter code: Small ribosomal subunit protein bS16 (86 aa).

The protein belongs to the bacterial ribosomal protein bS16 family.

This chain is Small ribosomal subunit protein bS16, found in Stenotrophomonas maltophilia (strain R551-3).